The chain runs to 204 residues: Small ribosomal subunit protein uS4 (204 aa).

The 64-residue stretch at 93–156 (SRLSSVLYHS…AKIPILIEAE (64 aa)) folds into the S4 RNA-binding domain.

This sequence belongs to the universal ribosomal protein uS4 family. In terms of assembly, part of the 30S ribosomal subunit. Contacts protein S5. The interaction surface between S4 and S5 is involved in control of translational fidelity.

In terms of biological role, one of the primary rRNA binding proteins, it binds directly to 16S rRNA where it nucleates assembly of the body of the 30S subunit. With S5 and S12 plays an important role in translational accuracy. The sequence is that of Small ribosomal subunit protein uS4 from Wolbachia pipientis subsp. Culex pipiens (strain wPip).